Reading from the N-terminus, the 129-residue chain is Fluoride-specific ion channel FluC (129 aa).

Transmembrane regions (helical) follow at residues 20-40, 67-87, and 96-116; these read WFLG…TLAA, LLII…TAEI, and IMTA…MMLL. Residues Gly-75 and Thr-78 each coordinate Na(+).

The protein belongs to the fluoride channel Fluc/FEX (TC 1.A.43) family.

The protein localises to the cell inner membrane. It catalyses the reaction fluoride(in) = fluoride(out). Its activity is regulated as follows. Na(+) is not transported, but it plays an essential structural role and its presence is essential for fluoride channel function. Its function is as follows. Fluoride-specific ion channel. Important for reducing fluoride concentration in the cell, thus reducing its toxicity. In Desulfovibrio desulfuricans (strain ATCC 27774 / DSM 6949 / MB), this protein is Fluoride-specific ion channel FluC.